A 313-amino-acid polypeptide reads, in one-letter code: Olfactory receptor 6E1 (313 aa).

Asn3 carries N-linked (GlcNAc...) asparagine glycosylation. A run of 7 helical transmembrane segments spans residues 25–45, 64–84, 96–116, 142–162, 192–212, 238–258, and 271–291; these read IFLGFLLTYFLILLGNFLIIF, FAMLEIWFTSVIFPKMLTNII, FLQAFLYFFLGTTEFFLLAVM, LVFCSWMSGLLLIIVPSSIVF, LVEFLGFVIANFSLLGTLAVT, TCSSHIIVVSLFYGSCIFMYV, and KVVALLNTVVTPTLNPFIYTL. A disulfide bridge connects residues Cys95 and Cys177.

It belongs to the G-protein coupled receptor 1 family.

It is found in the cell membrane. Functionally, odorant receptor. Activated by (-)-citronellal and to a lesser extent by (+)-citronellal. Not activated by carvone or limonene. The chain is Olfactory receptor 6E1 from Mus musculus (Mouse).